We begin with the raw amino-acid sequence, 77 residues long: U8-lycotoxin-Ls1l (77 aa).

The first 20 residues, 1–20 (MKLMIFTGLVLFAIVSLIEA), serve as a signal peptide directing secretion. Residues 21 to 26 (QAENEK) constitute a propeptide that is removed on maturation.

The protein belongs to the neurotoxin 19 (CSTX) family. 08 (U8-Lctx) subfamily. In terms of processing, contains 4 disulfide bonds. As to expression, expressed by the venom gland.

The protein localises to the secreted. The protein is U8-lycotoxin-Ls1l of Lycosa singoriensis (Wolf spider).